The chain runs to 356 residues: Magnesium-protoporphyrin IX monomethyl ester [oxidative] cyclase (356 aa).

It belongs to the AcsF family. Fe cation is required as a cofactor.

It catalyses the reaction Mg-protoporphyrin IX 13-monomethyl ester + 3 NADPH + 3 O2 + 2 H(+) = 3,8-divinyl protochlorophyllide a + 3 NADP(+) + 5 H2O. Its pathway is porphyrin-containing compound metabolism; chlorophyll biosynthesis (light-independent). Its function is as follows. Catalyzes the formation of the isocyclic ring in chlorophyll biosynthesis. Mediates the cyclase reaction, which results in the formation of divinylprotochlorophyllide (Pchlide) characteristic of all chlorophylls from magnesium-protoporphyrin IX 13-monomethyl ester (MgPMME). This chain is Magnesium-protoporphyrin IX monomethyl ester [oxidative] cyclase, found in Synechococcus sp. (strain CC9605).